The primary structure comprises 317 residues: Taste receptor type 2 member 14 (317 aa).

Residues 1–7 (MGGVIKS) lie on the Extracellular side of the membrane. The helical transmembrane segment at 8–28 (IFTFVLIVEFIIGNLGNSFIA) threads the bilayer. Residues 29–55 (LVNCIDWVKGRKISSVDRILTALAISK) are Cytoplasmic-facing. A helical membrane pass occupies residues 56–76 (ISLVWLIFGSWCVSVFFPALF). At 77 to 87 (ATEKMFRMLTN) the chain is on the extracellular side. Positions 86 and 89 each coordinate cholesterol. Residues 88–108 (IWTVINHFSVWLATGLGTFYF) form a helical membrane-spanning segment. The Cytoplasmic portion of the chain corresponds to 109–129 (LKIANFSNSIFLYLKWRVKKV). Residues 130–150 (VLVLLLVTSVFLFLNIALINI) form a helical membrane-spanning segment. Topologically, residues 151 to 184 (HINASINGYRRNKTCSSDSSNFTRFSSLIVLTST) are extracellular. Residues Asn-153, Asn-162, and Asn-171 are each glycosylated (N-linked (GlcNAc...) asparagine). A cholesterol-binding site is contributed by Val-180. A helical membrane pass occupies residues 185-205 (VFIFIPFTLSLAMFLLLIFSM). Topologically, residues 206 to 232 (WKHRKKMQHTVKRSGDASTKAHRGVKS) are cytoplasmic. The helical transmembrane segment at 233 to 253 (MMTFFLLYAIFSLSFFISVWT) threads the bilayer. The Extracellular portion of the chain corresponds to 254 to 261 (SERLEENL). The helical transmembrane segment at 262 to 282 (IILSQVMGMAYPSCHSCVLIL) threads the bilayer. Ser-265 and Met-268 together coordinate cholesterol. The Cytoplasmic segment spans residues 283–317 (GNKKLRQASLSVLLWLRYMFKDGEPSGHKEFRESS).

It belongs to the G-protein coupled receptor T2R family. Core component of the TAS2R14-GNAI1 complex, consisting of TAS2R14, GNAI1, GNB1 and GNG2; within the complex interacts with GNAI1. Core component of the TAS2R14-GNAT3 complex, consisting of TAS2R14, GNAT3, GNB1 and GNG2; within the complex interacts with GNAT3. Core component of the TAS2R14-GNAS2 complex, consisting of TAS2R14, GNAS2, GNB1 and GNG2; within the complex interacts with GNAS2.

Its subcellular location is the membrane. It carries out the reaction Ca(2+)(in) = Ca(2+)(out). The catalysed reaction is 3',5'-cyclic AMP(in) = 3',5'-cyclic AMP(out). Its activity is regulated as follows. Basal activity is enhanced by binding to bitter tastants, such as flufenamic acid and aristolochic acid. Regulated by cholesterol in a concentration-dependent manner. Functionally, gustducin-linked G-protein coupled receptor that plays a role in the perception of bitterness. The activity of this receptor stimulates GNAT3, activating the gustducin G-protein pathway. Likely plays a role in sensing the chemical composition of the gastrointestinal content and other extra-oral tissues via the inhibitory G-protein pathways. In Pan paniscus (Pygmy chimpanzee), this protein is Taste receptor type 2 member 14 (TAS2R14).